The following is a 260-amino-acid chain: Acetyl-coenzyme A carboxylase carboxyl transferase subunit alpha (260 aa).

In terms of domain architecture, CoA carboxyltransferase C-terminal spans 1-235; sequence MSAYDKVMAA…SNKILHSINK (235 aa).

Belongs to the AccA family. As to quaternary structure, acetyl-CoA carboxylase is a heterohexamer composed of biotin carboxyl carrier protein (AccB), biotin carboxylase (AccC) and two subunits each of ACCase subunit alpha (AccA) and ACCase subunit beta (AccD).

Its subcellular location is the cytoplasm. The catalysed reaction is N(6)-carboxybiotinyl-L-lysyl-[protein] + acetyl-CoA = N(6)-biotinyl-L-lysyl-[protein] + malonyl-CoA. Its pathway is lipid metabolism; malonyl-CoA biosynthesis; malonyl-CoA from acetyl-CoA: step 1/1. Its function is as follows. Component of the acetyl coenzyme A carboxylase (ACC) complex. First, biotin carboxylase catalyzes the carboxylation of biotin on its carrier protein (BCCP) and then the CO(2) group is transferred by the carboxyltransferase to acetyl-CoA to form malonyl-CoA. The chain is Acetyl-coenzyme A carboxylase carboxyl transferase subunit alpha from Ruminiclostridium cellulolyticum (strain ATCC 35319 / DSM 5812 / JCM 6584 / H10) (Clostridium cellulolyticum).